Consider the following 269-residue polypeptide: Putative imidazole glycerol phosphate synthase subunit hisF2 (269 aa).

Asp-133 is a catalytic residue.

The protein belongs to the HisA/HisF family. Heterodimer of HisH and HisF.

It is found in the cytoplasm. It catalyses the reaction 5-[(5-phospho-1-deoxy-D-ribulos-1-ylimino)methylamino]-1-(5-phospho-beta-D-ribosyl)imidazole-4-carboxamide + L-glutamine = D-erythro-1-(imidazol-4-yl)glycerol 3-phosphate + 5-amino-1-(5-phospho-beta-D-ribosyl)imidazole-4-carboxamide + L-glutamate + H(+). It participates in amino-acid biosynthesis; L-histidine biosynthesis; L-histidine from 5-phospho-alpha-D-ribose 1-diphosphate: step 5/9. IGPS catalyzes the conversion of PRFAR and glutamine to IGP, AICAR and glutamate. The HisF subunit catalyzes the cyclization activity that produces IGP and AICAR from PRFAR using the ammonia provided by the HisH subunit. The polypeptide is Putative imidazole glycerol phosphate synthase subunit hisF2 (hisF2) (Parasynechococcus marenigrum (strain WH8102)).